The chain runs to 299 residues: 4-diphosphocytidyl-2-C-methyl-D-erythritol kinase (299 aa).

The active site involves Lys-11. 94 to 104 provides a ligand contact to ATP; that stretch reads PQGGGLGGGSS. Asp-136 is a catalytic residue.

Belongs to the GHMP kinase family. IspE subfamily.

The catalysed reaction is 4-CDP-2-C-methyl-D-erythritol + ATP = 4-CDP-2-C-methyl-D-erythritol 2-phosphate + ADP + H(+). It participates in isoprenoid biosynthesis; isopentenyl diphosphate biosynthesis via DXP pathway; isopentenyl diphosphate from 1-deoxy-D-xylulose 5-phosphate: step 3/6. Functionally, catalyzes the phosphorylation of the position 2 hydroxy group of 4-diphosphocytidyl-2C-methyl-D-erythritol. This is 4-diphosphocytidyl-2-C-methyl-D-erythritol kinase from Bordetella pertussis (strain Tohama I / ATCC BAA-589 / NCTC 13251).